The chain runs to 205 residues: MKIEKPIFVVFEGIDGSGKSTLCKSLTEKLTERGIPSVNFTEPTNFETGKYLRKFLRGEIDLERKEQIDAFLNDREESLRQNILPSLESGKNVLLDRYMYSTAAYQSGDDLLPETIIEKNLKKNFKIPDLLFYLDLNPAIALERLSQRKENKERFETLAQLEKIRSAYNRILPKETIRIDGVKGPDEIVQECLEIFLRNFNRKFL.

An ATP-binding site is contributed by 13 to 20 (GIDGSGKS).

Belongs to the thymidylate kinase family.

It carries out the reaction dTMP + ATP = dTDP + ADP. Its function is as follows. Phosphorylation of dTMP to form dTDP in both de novo and salvage pathways of dTTP synthesis. This is Thymidylate kinase from Leptospira borgpetersenii serovar Hardjo-bovis (strain L550).